Reading from the N-terminus, the 597-residue chain is uncharacterized protein (597 aa).

In terms of domain architecture, PWWP spans 16-78; it reads VGRLVWVRRR…LENSKTVKAF (63 aa). 2 disordered regions span residues 126 to 210 and 449 to 482; these read NLCN…MRGL and QLKGKRNSRQMSKKQEERRNVYGEEANNNSSTPH. Over residues 134 to 143 the composition is skewed to basic and acidic residues; sequence EDSKRCLSGK. The span at 144-161 shows a compositional bias: acidic residues; that stretch reads EDEDSGSSDAEETEDDEL. A compositionally biased stretch (polar residues) spans 166 to 185; it reads EQLQSSISSQEMNNVGASKV. Over residues 450–460 the composition is skewed to basic residues; it reads LKGKRNSRQMS. The segment covering 461–470 has biased composition (basic and acidic residues); that stretch reads KKQEERRNVY.

This is an uncharacterized protein from Arabidopsis thaliana (Mouse-ear cress).